We begin with the raw amino-acid sequence, 146 residues long: Actin-depolymerizing factor 6 (146 aa).

S13 bears the Phosphoserine mark. One can recognise an ADF-H domain in the interval 14 to 146; sequence GMGVADESKT…DLEVLRERAN (133 aa).

The protein belongs to the actin-binding proteins ADF family. In terms of processing, phosphorylated. Expressed in vascular tissues of all organs.

Its subcellular location is the cytoplasm. The protein localises to the cytoskeleton. Functionally, actin-depolymerizing protein. Severs actin filaments (F-actin) and binds to actin monomers. In Arabidopsis thaliana (Mouse-ear cress), this protein is Actin-depolymerizing factor 6 (ADF6).